The following is a 368-amino-acid chain: DNA replication and repair protein RecF (368 aa).

30-37 contacts ATP; it reads GRNGQGKT.

It belongs to the RecF family.

Its subcellular location is the cytoplasm. Functionally, the RecF protein is involved in DNA metabolism; it is required for DNA replication and normal SOS inducibility. RecF binds preferentially to single-stranded, linear DNA. It also seems to bind ATP. This is DNA replication and repair protein RecF from Trichlorobacter lovleyi (strain ATCC BAA-1151 / DSM 17278 / SZ) (Geobacter lovleyi).